Reading from the N-terminus, the 292-residue chain is Lipoyl synthase (292 aa).

Residues Cys38, Cys43, Cys49, Cys64, Cys68, Cys71, and Ser277 each coordinate [4Fe-4S] cluster. In terms of domain architecture, Radical SAM core spans 50–266 (WSKGTATFML…KNRAESLGFR (217 aa)).

The protein belongs to the radical SAM superfamily. Lipoyl synthase family. The cofactor is [4Fe-4S] cluster.

The protein resides in the cytoplasm. The catalysed reaction is [[Fe-S] cluster scaffold protein carrying a second [4Fe-4S](2+) cluster] + N(6)-octanoyl-L-lysyl-[protein] + 2 oxidized [2Fe-2S]-[ferredoxin] + 2 S-adenosyl-L-methionine + 4 H(+) = [[Fe-S] cluster scaffold protein] + N(6)-[(R)-dihydrolipoyl]-L-lysyl-[protein] + 4 Fe(3+) + 2 hydrogen sulfide + 2 5'-deoxyadenosine + 2 L-methionine + 2 reduced [2Fe-2S]-[ferredoxin]. It participates in protein modification; protein lipoylation via endogenous pathway; protein N(6)-(lipoyl)lysine from octanoyl-[acyl-carrier-protein]: step 2/2. Its function is as follows. Catalyzes the radical-mediated insertion of two sulfur atoms into the C-6 and C-8 positions of the octanoyl moiety bound to the lipoyl domains of lipoate-dependent enzymes, thereby converting the octanoylated domains into lipoylated derivatives. The chain is Lipoyl synthase from Chlorobium limicola (strain DSM 245 / NBRC 103803 / 6330).